Consider the following 896-residue polypeptide: MTDVTIKALASEIQTSVDRLIQQFADAGIRKSADDSVTAQEKQTLLTHLNREHGSAPDKLTLQRKTRSTLNIPGTGGKSKSVQIEVRKKRTFVKRDPQEAERLAAEEQAQREAEEQARREAEEAAKREAQLKAEREAAEQAKREVADKAKREAAEKDKVSNQHTDEMTKTAQAEKIRRENEAAELKRKSEEEARRKLEEEARRVAEEARRMAEENEKNWSETSDSPEDSSDYHVTTSQHARQAEDDNDREVEGGRGRSRSSKAARPAKKGNKHAESKADREEARAAVRGGKGGKHRKGSALQQGFQKPAQAVNRDVIIGETITVGELANKMAVKGSQVIKAMMKLGAMATINQVIDQETAQLVAEEMGHKVILRRENELEEAVMSDRDTGAAAEPRAPVVTIMGHVDHGKTSLLDYIRSTKVASGEAGGITQHIGAYHVETDNGMITFLDTPGHAAFTSMRARGAQATDIVVLVVAADDGVMPQTIEAIQHAKAAQVPVVVAVNKIDKPEADPDRVKNELSQYGILPEEWGGESQFVHVSAKAGTGIDDLLDAILLQAEVLELKAVRNGMASGAVIESFLDKGRGPVATVLVREGTLHKGDIVLCGFEYGRVRAMRDELGREVLEAGPSIPVEILGLSGVPAAGDEVTVVRDEKKAREVALYRQGKFREVKLARQQKSKLENMFANMTEGEVHEVNIVLKADVQGSVEAISDSLLKLSTDEVKVKIIGSGVGGITETDATLAAASNAILVGFNVRADASARKVIEAESLDLRYYSVIYNLIDEVKAAMSGMLSPELKQQIIGLAEVRDVFKSPKFGAIAGCMVTEGTIKRHNPIRVLRDNVVIYEGELESLRRFKDDVNEVRNGMECGIGVKNYNDVRVGDMIEVFEIIEIQRSID.

Over residues Val-93–Trp-219 the composition is skewed to basic and acidic residues. The disordered stretch occupies residues Val-93 to Lys-307. Basic residues predominate over residues Gly-256–Asn-271. The span at Lys-272–Ala-285 shows a compositional bias: basic and acidic residues. The tr-type G domain occupies Pro-395 to Lys-564. The segment at Gly-404–Thr-411 is G1. Gly-404 to Thr-411 contacts GTP. The tract at residues Gly-429–His-433 is G2. The G3 stretch occupies residues Asp-450–Gly-453. Residues Asp-450–His-454 and Asn-504–Asp-507 each bind GTP. Positions Asn-504–Asp-507 are G4. Residues Ser-540–Lys-542 are G5.

Belongs to the TRAFAC class translation factor GTPase superfamily. Classic translation factor GTPase family. IF-2 subfamily.

The protein localises to the cytoplasm. Functionally, one of the essential components for the initiation of protein synthesis. Protects formylmethionyl-tRNA from spontaneous hydrolysis and promotes its binding to the 30S ribosomal subunits. Also involved in the hydrolysis of GTP during the formation of the 70S ribosomal complex. The polypeptide is Translation initiation factor IF-2 (Klebsiella pneumoniae (strain 342)).